A 115-amino-acid polypeptide reads, in one-letter code: Large ribosomal subunit protein bL19 (115 aa).

This sequence belongs to the bacterial ribosomal protein bL19 family.

Its function is as follows. This protein is located at the 30S-50S ribosomal subunit interface and may play a role in the structure and function of the aminoacyl-tRNA binding site. The protein is Large ribosomal subunit protein bL19 of Lachnospira eligens (strain ATCC 27750 / DSM 3376 / VPI C15-48 / C15-B4) (Eubacterium eligens).